Reading from the N-terminus, the 138-residue chain is Cysteine desulfuration protein SufE (138 aa).

Catalysis depends on Cys51, which acts as the Cysteine persulfide intermediate.

Belongs to the SufE family. As to quaternary structure, homodimer. Interacts with SufS.

Its subcellular location is the cytoplasm. The protein operates within cofactor biosynthesis; iron-sulfur cluster biosynthesis. In terms of biological role, participates in cysteine desulfuration mediated by SufS. Cysteine desulfuration mobilizes sulfur from L-cysteine to yield L-alanine and constitutes an essential step in sulfur metabolism for biosynthesis of a variety of sulfur-containing biomolecules. Functions as a sulfur acceptor for SufS, by mediating the direct transfer of the sulfur atom from the S-sulfanylcysteine of SufS, an intermediate product of cysteine desulfuration process. The protein is Cysteine desulfuration protein SufE of Escherichia coli O8 (strain IAI1).